Consider the following 213-residue polypeptide: StAR-related lipid transfer protein 5 (213 aa).

Positions 1–213 (MDPALAAQMS…LQKAVKQFHE (213 aa)) constitute an START domain.

Functionally, may be involved in the intracellular transport of sterols or other lipids. May bind cholesterol or other sterols. The polypeptide is StAR-related lipid transfer protein 5 (STARD5) (Pongo abelii (Sumatran orangutan)).